The chain runs to 515 residues: Zinc-binding protein AdcA (515 aa).

Positions 1–28 (MKKKILLMMSLISVFFAWQLTQAKQVLA) are cleaved as a signal peptide. Residue H66 participates in Zn(2+) binding. The segment at 125 to 148 (DHHHEDADKKHEHNKHSEEGHNHA) is disordered. Residues 129–148 (EDADKKHEHNKHSEEGHNHA) form a his-rich loop region. Residues H152, H216, and E291 each coordinate Zn(2+).

Belongs to the bacterial solute-binding protein 9 family.

Part of the ATP-binding cassette (ABC) transport system AdcABC involved in zinc import. Binds zinc with high affinity and specificity and delivers it to the membrane permease for translocation into the cytoplasm. The protein is Zinc-binding protein AdcA (adcA) of Streptococcus pyogenes serotype M1.